The following is a 324-amino-acid chain: Interleukin-12 subunit beta (324 aa).

Positions 1–22 (MHLQQLVVSWFSLVWLASPIVA) are cleaved as a signal peptide. The Ig-like C2-type domain maps to 23 to 106 (IWELEKNVYV…LSQSLLLLHK (84 aa)). C50 and C90 are disulfide-bonded. Residues N125, N135, and N218 are each glycosylated (N-linked (GlcNAc...) asparagine). In terms of domain architecture, Fibronectin type-III spans 233-324 (PPKNLQLNPL…WSEWASVSCN (92 aa)).

The protein belongs to the IL-12B family. As to quaternary structure, heterodimer with IL12A; disulfide-linked. The heterodimer is known as interleukin IL-12. Heterodimer with IL23A; disulfide-linked. The heterodimer is known as interleukin IL-23. Also secreted as a monomer. Interacts with NBR1; this interaction promotes IL-12 secretion.

The protein localises to the secreted. In terms of biological role, cytokine that can act as a growth factor for activated T and NK cells, enhance the lytic activity of NK/lymphokine-activated killer cells, and stimulate the production of IFN-gamma by resting PBMC. Associates with IL23A to form the IL-23 interleukin, a heterodimeric cytokine which functions in innate and adaptive immunity. IL-23 may constitute with IL-17 an acute response to infection in peripheral tissues. IL-23 binds to a heterodimeric receptor complex composed of IL12RB1 and IL23R, activates the Jak-Stat signaling cascade, stimulates memory rather than naive T-cells and promotes production of pro-inflammatory cytokines. IL-23 induces autoimmune inflammation and thus may be responsible for autoimmune inflammatory diseases and may be important for tumorigenesis. The sequence is that of Interleukin-12 subunit beta (IL12B) from Sus scrofa (Pig).